Reading from the N-terminus, the 503-residue chain is Maturase K (503 aa).

It belongs to the intron maturase 2 family. MatK subfamily.

The protein resides in the plastid. The protein localises to the chloroplast. In terms of biological role, usually encoded in the trnK tRNA gene intron. Probably assists in splicing its own and other chloroplast group II introns. This Vicia villosa (Hairy vetch) protein is Maturase K.